The following is a 238-amino-acid chain: Lipid transferase CIDEC (238 aa).

Residues 1–35 are required for liquid-liquid phase separation (LLPS); the sequence is MDYAMKSLSLLYPRSLSRHVAVSTAVVTQQLVSEP. One can recognise a CIDE-N domain in the interval 41–118; that stretch reads RARPCRVSTA…VLQKGQKWKS (78 aa).

This sequence belongs to the CIDE family. Homodimer. Interacts with CIDEA. Homooligomer; undergoes liquid-liquid phase separation (LLPS) via its N-terminus, facilitating lipid droplet fusion, occurs at the lipid droplet contact sites. Interacts with PLIN1. Interacts with NFAT5; this interaction is direct and retains NFAT5 in the cytoplasm. Interacts with CEBPB. Interacts with isoform CLSTN3beta of CLSTN3; inhibiting the lipid transferase activity of CIDEC. Post-translationally, ubiquitinated and targeted to proteasomal degradation, resulting in a short half-life (about 15 minutes in 3T3-L1 cells). Protein stability depends on triaclyglycerol synthesis, fatty acid availability and lipid droplet formation.

It is found in the lipid droplet. Its subcellular location is the endoplasmic reticulum. The protein localises to the nucleus. The catalysed reaction is a triacyl-sn-glycerol(in) = a triacyl-sn-glycerol(out). Lipid transferase specifically expressed in white adipose tissue, which promotes unilocular lipid droplet formation by mediating lipid droplet fusion. Lipid droplet fusion promotes their enlargement, restricting lipolysis and favoring lipid storage. Localizes on the lipid droplet surface, at focal contact sites between lipid droplets, and mediates atypical lipid droplet fusion by undergoing liquid-liquid phase separation (LLPS) and promoting directional net neutral lipid transfer from the smaller to larger lipid droplets. The transfer direction may be driven by the internal pressure difference between the contacting lipid droplet pair. Its role in neutral lipid transfer and lipid droplet enlargement is activated by the interaction with PLIN1. May also act as a CEBPB coactivator in the white adipose tissue to control the expression of a subset of CEBPB downstream target genes, including SOCS1, SOCS3, TGFB1, TGFBR1, ID2 and XDH. When overexpressed in preadipocytes, induces apoptosis or increases cell susceptibility to apoptosis induced by serum deprivation or TGFB treatment. The chain is Lipid transferase CIDEC from Rattus norvegicus (Rat).